We begin with the raw amino-acid sequence, 273 residues long: NADPH-dependent 7-cyano-7-deazaguanine reductase (273 aa).

Valine 81–serine 83 serves as a coordination point for substrate. Residue serine 83 to lysine 84 coordinates NADPH. The Thioimide intermediate role is filled by cysteine 179. Catalysis depends on aspartate 186, which acts as the Proton donor. Alanine 218–glutamate 219 provides a ligand contact to substrate. Residue arginine 247 to glycine 248 coordinates NADPH.

It belongs to the GTP cyclohydrolase I family. QueF type 2 subfamily. Homodimer.

It localises to the cytoplasm. It carries out the reaction 7-aminomethyl-7-carbaguanine + 2 NADP(+) = 7-cyano-7-deazaguanine + 2 NADPH + 3 H(+). Its pathway is tRNA modification; tRNA-queuosine biosynthesis. Catalyzes the NADPH-dependent reduction of 7-cyano-7-deazaguanine (preQ0) to 7-aminomethyl-7-deazaguanine (preQ1). This Rickettsia massiliae (strain Mtu5) protein is NADPH-dependent 7-cyano-7-deazaguanine reductase.